The chain runs to 354 residues: Histone-lysine N-methyltransferase SUVR3 (354 aa).

Residues 143-188 (SGCECERCEEGYCKCLAFAGMEEIANECGSGCGCGSDCSNRVTQKG) enclose the Pre-SET domain. Positions 145, 147, 150, 155, 157, 170, 174, 176, and 180 each coordinate Zn(2+). Positions 191 to 323 (VSLKIVRDEK…AEEELSFSYG (133 aa)) constitute an SET domain. S-adenosyl-L-methionine contacts are provided by residues 201 to 203 (KGW) and 281 to 282 (NH). Cysteine 284 is a binding site for Zn(2+). Tyrosine 322 is a binding site for S-adenosyl-L-methionine. The 17-residue stretch at 334–350 (DKLNCSCGSSCCLGTLP) folds into the Post-SET domain. Zn(2+) is bound by residues cysteine 338, cysteine 340, and cysteine 345.

This sequence belongs to the class V-like SAM-binding methyltransferase superfamily.

The protein resides in the nucleus. Its subcellular location is the chromosome. It catalyses the reaction L-lysyl-[histone] + S-adenosyl-L-methionine = N(6)-methyl-L-lysyl-[histone] + S-adenosyl-L-homocysteine + H(+). Its function is as follows. Histone methyltransferase. The chain is Histone-lysine N-methyltransferase SUVR3 (SUVR3) from Arabidopsis thaliana (Mouse-ear cress).